The primary structure comprises 772 residues: Mitochondrial intermediate peptidase (772 aa).

Residues 1–33 constitute a mitochondrion transit peptide; the sequence is MLARPSTTVLARRPFFRFRGCLNEPRPTKARCL. His-556 serves as a coordination point for Zn(2+). Residue Glu-557 is part of the active site. Zn(2+) contacts are provided by His-560 and His-563.

It belongs to the peptidase M3 family. It depends on Zn(2+) as a cofactor.

The protein localises to the mitochondrion matrix. The enzyme catalyses Release of an N-terminal octapeptide as second stage of processing of some proteins imported into the mitochondrion.. In terms of biological role, cleaves proteins, imported into the mitochondrion, to their mature size. While most mitochondrial precursor proteins are processed to the mature form in one step by mitochondrial processing peptidase (MPP), the sequential cleavage by MIP of an octapeptide after initial processing by MPP is a required step for a subgroup of nuclear-encoded precursor proteins destined for the matrix or the inner membrane. The protein is Mitochondrial intermediate peptidase (OCT1) of Coprinopsis scobicola (Ink cap fungus).